Reading from the N-terminus, the 412-residue chain is G-protein coupled receptor homolog UL33 (412 aa).

Residues 1 to 35 (MDTIIHNTTNRSTDTPHVNITCNITEPLSAIRTTE) lie on the Virion surface side of the membrane. Asn7, Asn19, and Asn23 each carry an N-linked (GlcNAc...) asparagine; by host glycan. A helical membrane pass occupies residues 36–56 (AVINTFIIFVGGPLNAIVLIT). Topologically, residues 57-80 (QLLTNRVLGYSTPTIYMTNLYSTN) are intravirion. Residues 81–101 (FLTLTVLPFIVLSNQWLLPAS) traverse the membrane as a helical segment. The Virion surface segment spans residues 102 to 106 (VASCK). Cys105 and Cys188 are disulfide-bonded. A helical membrane pass occupies residues 107-127 (FLSVIYYSSCTVGFATVALIA). Topologically, residues 128–147 (ADRYRVLHKRTYARQSYRST) are intravirion. Residues 148-168 (YIILLLTWFAGLIFSMPAAVY) traverse the membrane as a helical segment. Residues 169-206 (TTVVIHNGTNGQSSNGHATCVLYFIADEVYTVLLSWKV) lie on the Virion surface side of the membrane. Residues 207–227 (LLTLVWGAAPVIMMTWFYAFF) form a helical membrane-spanning segment. At 228 to 244 (YSTVQRASQKQRSRTLT) the chain is on the intravirion side. The helical transmembrane segment at 245–265 (FVSVLLISFVALQTPYVSIMI) threads the bilayer. Residues 266–292 (FNSYATAAWPMDCEHLTLRRTIGTLSR) are Virion surface-facing. The helical transmembrane segment at 293–313 (LVPHLHCLINPILYALLGHDF) threads the bilayer. Over 314-412 (LQRMRQCFRG…SQSHHNLSGV (99 aa)) the chain is Intravirion. The segment at 377-412 (NFPSGTWKGGQKTASNDTSTKIPHRLSQSHHNLSGV) is disordered. Residues 388-397 (KTASNDTSTK) show a composition bias toward polar residues.

Belongs to the G-protein coupled receptor 1 family. In terms of assembly, heterodimerizes with US28.

The protein localises to the virion. The protein resides in the host cell membrane. It localises to the host cytoplasm. Its function is as follows. G-protein-coupled receptor (vGPCR) that constitutively activates multiple oncogenic signaling pathways including STAT3, AP-1, phospholipase C, NF-kappa-B or cAMP-responsive element (CRE) pathways. Plays an important role in viral reactivation from latency through activation of host CREB1, facilitating its recruitment to the viral major immediate early (MIE) genes. In turn, expression of the MIE-driven genes such as UL123 are de-repressed. Also facilitates virus dissemination via the extracellular and cell-to-cell route. In Human cytomegalovirus (strain Merlin) (HHV-5), this protein is G-protein coupled receptor homolog UL33 (UL33).